The following is a 569-amino-acid chain: GATOR1 complex protein NPRL3 (569 aa).

2 disordered regions span residues Pro27–Gly60 and Thr441–Ser476. Polar residues-rich tracts occupy residues His34 to Gly52 and Thr441 to Ala468. Ser476 carries the post-translational modification Phosphoserine.

Belongs to the NPR3 family. In terms of assembly, within the GATOR complex, component of the GATOR1 subcomplex, made of DEPDC5, NPRL2 and NPRL3. GATOR1 mediates the strong interaction of the GATOR complex with small GTPases Rag (RagA/RRAGA, RagB/RRAGB, RagC/RRAGC and/or RagD/RRAGD) heterodimers. GATOR1 interacts with GPR155/LYCHOS; interaction takes place in presence of cholesterol and prevents interaction between GATOR1 and KICSTOR.

It is found in the lysosome membrane. Its function is as follows. As a component of the GATOR1 complex functions as an inhibitor of the amino acid-sensing branch of the mTORC1 pathway. In response to amino acid depletion, the GATOR1 complex has GTPase activating protein (GAP) activity and strongly increases GTP hydrolysis by RagA/RRAGA (or RagB/RRAGB) within heterodimeric Rag complexes, thereby turning them into their inactive GDP-bound form, releasing mTORC1 from lysosomal surface and inhibiting mTORC1 signaling. In the presence of abundant amino acids, the GATOR1 complex is negatively regulated by GATOR2, the other GATOR subcomplex, in this amino acid-sensing branch of the TORC1 pathway. The chain is GATOR1 complex protein NPRL3 from Mus musculus (Mouse).